Reading from the N-terminus, the 372-residue chain is 4-hydroxy-3-methylbut-2-en-1-yl diphosphate synthase (flavodoxin) (372 aa).

The [4Fe-4S] cluster site is built by C270, C273, C305, and E312.

Belongs to the IspG family. [4Fe-4S] cluster is required as a cofactor.

The catalysed reaction is (2E)-4-hydroxy-3-methylbut-2-enyl diphosphate + oxidized [flavodoxin] + H2O + 2 H(+) = 2-C-methyl-D-erythritol 2,4-cyclic diphosphate + reduced [flavodoxin]. Its pathway is isoprenoid biosynthesis; isopentenyl diphosphate biosynthesis via DXP pathway; isopentenyl diphosphate from 1-deoxy-D-xylulose 5-phosphate: step 5/6. Converts 2C-methyl-D-erythritol 2,4-cyclodiphosphate (ME-2,4cPP) into 1-hydroxy-2-methyl-2-(E)-butenyl 4-diphosphate. The chain is 4-hydroxy-3-methylbut-2-en-1-yl diphosphate synthase (flavodoxin) from Salmonella gallinarum (strain 287/91 / NCTC 13346).